The primary structure comprises 452 residues: Interferon-induced protein 44-like (452 aa).

Positions 1 to 159 constitute a TLDc domain; it reads MEVTTRLTWN…YLECEVFRVE (159 aa).

This sequence belongs to the IFI44 family. In terms of assembly, interacts with FKBP5; this interaction modulates IKBKB and IKBKE kinase activities.

It localises to the cytoplasm. In terms of biological role, type I interferon-stimulated gene (ISG) that plays a critical role in antiviral and antibacterial activity. During bacterial infection, promotes macrophage differentiation and facilitates inflammatory cytokine secretion. Plays a role in the control of respiratory syncytial virus/RSV infection, reducing the ability of the virus to replicate. Exhibits a low antiviral activity against hepatitis C virus. Also acts as a feedback regulator of IFN responses by negatively regulating IKBKB and IKBKE kinase activities through interaction with FKBP5. This Homo sapiens (Human) protein is Interferon-induced protein 44-like (IFI44L).